The sequence spans 502 residues: Inosine-5'-monophosphate dehydrogenase 2 (502 aa).

Position 2 is an N-acetylserine (serine 2). The region spanning methionine 166–serine 225 is the CBS domain. NAD(+) is bound by residues aspartate 264–serine 266 and glycine 314–glycine 316. Positions 316 and 318 each coordinate K(+). Serine 319 serves as a coordination point for IMP. Residue cysteine 321 coordinates K(+). The active-site Thioimidate intermediate is cysteine 321. Residues aspartate 354–glycine 356, glycine 377–serine 378, and tyrosine 401–glycine 405 contribute to the IMP site. Catalysis depends on arginine 417, which acts as the Proton acceptor. Residue glutamine 429 coordinates IMP. Glutamate 488, glycine 489, and glycine 490 together coordinate K(+).

It belongs to the IMPDH/GMPR family. As to quaternary structure, homotetramer. K(+) serves as cofactor.

Its subcellular location is the cytoplasm. The catalysed reaction is IMP + NAD(+) + H2O = XMP + NADH + H(+). The protein operates within purine metabolism; XMP biosynthesis via de novo pathway; XMP from IMP: step 1/1. Mycophenolic acid (MPA) is a non-competitive inhibitor that prevents formation of the closed enzyme conformation by binding to the same site as the amobile flap. In contrast, mizoribine monophosphate (MZP) is a competitive inhibitor that induces the closed conformation. MPA is a potent inhibitor of mammalian IMPDHs but a poor inhibitor of the bacterial enzymes. MZP is a more potent inhibitor of bacterial IMPDH. Functionally, catalyzes the conversion of inosine 5'-phosphate (IMP) to xanthosine 5'-phosphate (XMP), the first committed and rate-limiting step in the de novo synthesis of guanine nucleotides, and therefore plays an important role in the regulation of cell growth. This chain is Inosine-5'-monophosphate dehydrogenase 2, found in Arabidopsis thaliana (Mouse-ear cress).